Consider the following 607-residue polypeptide: COMPASS component cclA (607 aa).

A compositionally biased stretch (low complexity) spans 1-19 (MASTHAAGSPAPSSSINSP). Disordered regions lie at residues 1 to 22 (MASTHAAGSPAPSSSINSPILH) and 34 to 86 (GEGS…KSVA). The span at 57-69 (SKRNKRDSRKKRE) shows a compositional bias: basic residues. The 220-residue stretch at 157 to 376 (IADTDFPHIK…YAFNLKETPA (220 aa)) folds into the B30.2/SPRY domain. Positions 587-607 (NTPITDVPVPPEPEDTPMTGG) are disordered.

Belongs to the cclA family. In terms of assembly, component of the COMPASS complex.

The protein localises to the nucleus. It localises to the chromosome. It is found in the telomere. Component of the COMPASS (Set1C) complex that specifically mono-, di- and trimethylates histone H3 to form H3K4me1/2/3, which subsequently plays a role in telomere length maintenance and transcription elongation regulation. Controls the production of several secondary metabolites, including monodictyphenone, emodin and emodin derivatives, as well as two anti-osteoporosis polyketides, F9775A and F9775B. The polypeptide is COMPASS component cclA (Emericella nidulans (strain FGSC A4 / ATCC 38163 / CBS 112.46 / NRRL 194 / M139) (Aspergillus nidulans)).